The chain runs to 212 residues: ER lumen protein-retaining receptor 1 (212 aa).

The Lumenal portion of the chain corresponds to 1–4; it reads MNLF. The helical transmembrane segment at 5–24 threads the bilayer; it reads RFLGDLSHLLAIILLLLKIW. Residues 25 to 32 are Cytoplasmic-facing; it reads KSRSCAGI. Residues 33-52 form a helical membrane-spanning segment; the sequence is SGKSQVLFAVVFTARYLDLF. The interval 47 to 48 is interaction with the K-D-E-L motif on target proteins; it reads RY. The Lumenal portion of the chain corresponds to 53-58; it reads TNYISL. The helical transmembrane segment at 59 to 79 threads the bilayer; sequence YNTCMKVVYIACSFTTVWMIY. Residues 80-92 are Cytoplasmic-facing; it reads SKFKATYDGNHDT. The chain crosses the membrane as a helical span at residues 93–110; that stretch reads FRVEFLVVPTAVLAFLVN. The Lumenal segment spans residues 111–116; sequence HDFTPL. The chain crosses the membrane as a helical span at residues 117 to 135; that stretch reads EILWTFSIYLESVAILPQL. Residues 136-149 lie on the Cytoplasmic side of the membrane; it reads FMVSKTGEAETITS. The chain crosses the membrane as a helical span at residues 150–168; sequence HYLFALGVYRTLYLFNWIW. The segment at 159-169 is interaction with the K-D-E-L motif on target proteins; sequence RTLYLFNWIWR. Over 169-178 the chain is Lumenal; sequence RYHFEGFFDL. Residues 179 to 199 form a helical membrane-spanning segment; that stretch reads IAIVAGLVQTVLYCDFFYLYI. The Cytoplasmic segment spans residues 200–212; it reads TKVLKGKKLSLPA. The tract at residues 204 to 207 is important for recycling of cargo proteins with the sequence motif K-D-E-L from the Golgi to the endoplasmic reticulum; it reads KGKK. S209 is subject to Phosphoserine; by PKA.

Belongs to the ERD2 family. As to quaternary structure, upon ligand binding the receptor oligomerizes and interacts with components of the transport machinery such as ARFGAP1 and ARF1. Post-translationally, phosphorylation by PKA at Ser-209 is required for endoplasmic reticulum retention function.

Its subcellular location is the golgi apparatus membrane. It localises to the cytoplasmic vesicle. It is found in the COPI-coated vesicle membrane. The protein localises to the endoplasmic reticulum membrane. The protein resides in the endoplasmic reticulum-Golgi intermediate compartment membrane. Its function is as follows. Receptor for the C-terminal sequence motif K-D-E-L that is present on endoplasmic reticulum resident proteins and that mediates their recycling from the Golgi back to the endoplasmic reticulum. The protein is ER lumen protein-retaining receptor 1 (Kdelr1) of Rattus norvegicus (Rat).